Reading from the N-terminus, the 423-residue chain is AP-1 complex subunit mu-1 (423 aa).

The residue at position 2 (Ser-2) is an N-acetylserine. Thr-152, Thr-154, and Thr-223 each carry phosphothreonine. The 254-residue stretch at 168 to 421 folds into the MHD domain; it reads KNEVFLDVIE…ITQNGDYQLR (254 aa).

It belongs to the adaptor complexes medium subunit family. As to quaternary structure, adaptor protein complex 1 (AP-1) is a heterotetramer composed of two large adaptins (gamma-type subunit AP1G1 and beta-type subunit AP1B1), a medium adaptin (mu-type subunit AP1M1 or AP1M2) and a small adaptin (sigma-type subunit AP1S1 or AP1S2 or AP1S3). Interacts with MARCHF11. Post-translationally, phosphorylation of membrane-bound AP1M1/AP1M2 increases its affinity for sorting signals.

The protein resides in the cytoplasmic vesicle. It localises to the clathrin-coated vesicle membrane. Its subcellular location is the golgi apparatus. In terms of biological role, subunit of clathrin-associated adaptor protein complex 1 that plays a role in protein sorting in the trans-Golgi network (TGN) and endosomes. The AP complexes mediate the recruitment of clathrin to membranes and the recognition of sorting signals within the cytosolic tails of transmembrane cargo molecules. This chain is AP-1 complex subunit mu-1, found in Bos taurus (Bovine).